The following is a 489-amino-acid chain: Acetylcholine receptor subunit beta (489 aa).

The N-terminal stretch at 1 to 20 is a signal peptide; sequence NSGALLWPLIWGLLLIGTQA. Topologically, residues 21–235 are extracellular; sequence LDKEAQLRDK…ITFYLVIQRK (215 aa). N-linked (GlcNAc...) asparagine glycans are attached at residues Asn135 and Asn161. Cys148 and Cys162 are oxidised to a cystine. 3 consecutive transmembrane segments (helical) span residues 236–260, 268–286, and 302–323; these read PLFY…VFYL, MTLS…LLLA, and YLIF…VLNL. At 324-457 the chain is on the cytoplasmic side; that stretch reads HHRSPNTHHM…WQYVAMVVDR (134 aa). The chain crosses the membrane as a helical span at residues 458–476; the sequence is LFLWTFIAFTSLGTLSIFL.

The protein belongs to the ligand-gated ion channel (TC 1.A.9) family. Acetylcholine receptor (TC 1.A.9.1) subfamily. Beta-1/CHRNB1 sub-subfamily. In terms of assembly, pentamer of two alpha chains, and one each of the beta, delta, and gamma (in immature muscle) or epsilon (in mature muscle) chains.

The protein resides in the postsynaptic cell membrane. It is found in the cell membrane. The catalysed reaction is K(+)(in) = K(+)(out). It carries out the reaction Na(+)(in) = Na(+)(out). In terms of biological role, after binding acetylcholine, the AChR responds by an extensive change in conformation that affects all subunits and leads to opening of an ion-conducting channel across the plasma membrane. This Xenopus laevis (African clawed frog) protein is Acetylcholine receptor subunit beta (chrnb1).